Reading from the N-terminus, the 308-residue chain is Hydroxyacylglutathione hydrolase, mitochondrial (308 aa).

The transit peptide at 1-13 (MVVGRGLLGRRSL) directs the protein to the mitochondrion. Histidine 102, histidine 104, aspartate 106, and histidine 107 together coordinate Zn(2+). At lysine 116 the chain carries N6-acetyllysine. Positions 158 and 182 each coordinate Zn(2+). Substrate-binding positions include 191–193 (KFY) and 221–223 (HEY). Zn(2+) is bound at residue histidine 221. Lysine 229 carries the N6-acetyllysine; alternate modification. Lysine 229 is subject to N6-succinyllysine; alternate. 297-300 (RREK) serves as a coordination point for substrate.

It belongs to the metallo-beta-lactamase superfamily. Glyoxalase II family. Monomer. Zn(2+) serves as cofactor. Expressed in liver and kidney.

It is found in the mitochondrion matrix. Its subcellular location is the cytoplasm. It catalyses the reaction an S-(2-hydroxyacyl)glutathione + H2O = a 2-hydroxy carboxylate + glutathione + H(+). The enzyme catalyses (R)-S-lactoylglutathione + H2O = (R)-lactate + glutathione + H(+). It participates in secondary metabolite metabolism; methylglyoxal degradation; (R)-lactate from methylglyoxal: step 2/2. Its function is as follows. Thiolesterase that catalyzes the hydrolysis of S-D-lactoyl-glutathione to form glutathione and D-lactic acid. The chain is Hydroxyacylglutathione hydrolase, mitochondrial (HAGH) from Homo sapiens (Human).